The sequence spans 955 residues: Auxin response factor 11 (955 aa).

The TF-B3 DNA-binding region spans 143-245; the sequence is FCKNLTASDT…QLLLGVRRAT (103 aa). The span at 518-543 shows a compositional bias: polar residues; it reads ESKLNATSRDPRNTDSYTSRSTSEQN. Disordered regions lie at residues 518–573 and 609–646; these read ESKL…LSSA and TQGN…KSVN. Over residues 551 to 560 the composition is skewed to basic residues; sequence KTRRSKKGLP. One can recognise a PB1 domain in the interval 852 to 936; it reads RTYTKVQKQG…RCIRILSPSE (85 aa).

It belongs to the ARF family. Homodimers and heterodimers.

It is found in the nucleus. In terms of biological role, auxin response factors (ARFs) are transcriptional factors that bind specifically to the DNA sequence 5'-TGTCTC-3' found in the auxin-responsive promoter elements (AuxREs). The sequence is that of Auxin response factor 11 (ARF11) from Oryza sativa subsp. indica (Rice).